An 87-amino-acid polypeptide reads, in one-letter code: U3-theraphotoxin-Hhn1c (87 aa).

Residues 1–24 (MVNMKASMFLTFAGLVLLFVVCHA) form the signal peptide. Positions 25–52 (SESEEKEFPKEMLSSIFAVDDDFKQEER) are excised as a propeptide. Disulfide bonds link cysteine 54–cysteine 67, cysteine 61–cysteine 72, and cysteine 66–cysteine 79.

Belongs to the neurotoxin 10 (Hwtx-1) family. 51 (Hntx-8) subfamily. Hntx-8 sub-subfamily. Expressed by the venom gland.

It is found in the secreted. Its function is as follows. Ion channel inhibitor. The chain is U3-theraphotoxin-Hhn1c from Cyriopagopus hainanus (Chinese bird spider).